Here is a 184-residue protein sequence, read N- to C-terminus: Ras-related protein RabN2 (184 aa).

3–10 (GDYRSGKT) lines the GTP pocket. Residues 25-32 (TNPSTFDY) carry the Effector region motif. GTP is bound by residues 50–54 (DTAGH) and 117–120 (TKSD).

This sequence belongs to the small GTPase superfamily. Rab family.

This Dictyostelium discoideum (Social amoeba) protein is Ras-related protein RabN2 (rabN2).